The primary structure comprises 38 residues: Large ribosomal subunit protein bL36 (38 aa).

The protein belongs to the bacterial ribosomal protein bL36 family.

The polypeptide is Large ribosomal subunit protein bL36 (Flavobacterium johnsoniae (strain ATCC 17061 / DSM 2064 / JCM 8514 / BCRC 14874 / CCUG 350202 / NBRC 14942 / NCIMB 11054 / UW101) (Cytophaga johnsonae)).